A 254-amino-acid chain; its full sequence is uncharacterized protein (254 aa).

8 consecutive transmembrane segments (helical) span residues 41-61 (LFVF…IKII), 64-84 (ILQA…EYFF), 91-111 (IYCG…LYIL), 125-145 (LLIS…FVLA), 146-166 (PAAL…LWSF), 172-192 (FILL…IQLL), 204-224 (MIRA…ILTP), and 232-252 (LIMS…LLVL).

The protein belongs to the TatC family.

The protein localises to the plastid. Its subcellular location is the chloroplast membrane. This is an uncharacterized protein from Pyropia yezoensis (Susabi-nori).